We begin with the raw amino-acid sequence, 244 residues long: MGQKVNPISNRLGIIRGWDSNWYGGKNYGDTLLEDSKIRKYLNARLAKASVSRIVIERTLKLITITVCTSRPGIIIGKGGQEVDKLKEELKKITDKEVQINIFEVKRPELDAVIVANNIARQLEGKIAYRRAVKMAIASTMRMGAEGIKIQISGRLNGAEMARSEMYKEGRTPLHTLRADIDYALAEALTKVGLLGVKVWICRGEVYGKRDLAPSFTAAKETGRRNDNAGGNRDKNFKRKRANR.

One can recognise a KH type-2 domain in the interval 38 to 106 (IRKYLNARLA…EVQINIFEVK (69 aa)). Residues 222–235 (TGRRNDNAGGNRDK) are compositionally biased toward basic and acidic residues. Residues 222–244 (TGRRNDNAGGNRDKNFKRKRANR) are disordered.

Belongs to the universal ribosomal protein uS3 family. Part of the 30S ribosomal subunit. Forms a tight complex with proteins S10 and S14.

Functionally, binds the lower part of the 30S subunit head. Binds mRNA in the 70S ribosome, positioning it for translation. The polypeptide is Small ribosomal subunit protein uS3 (Parabacteroides distasonis (strain ATCC 8503 / DSM 20701 / CIP 104284 / JCM 5825 / NCTC 11152)).